The sequence spans 455 residues: Mu-like prophage FluMu DNA circularization protein (455 aa).

The segment at residues Val368–Tyr387 is a DNA-binding region (H-T-H motif).

To phage Mu protein N.

This is Mu-like prophage FluMu DNA circularization protein from Haemophilus influenzae (strain ATCC 51907 / DSM 11121 / KW20 / Rd).